Consider the following 178-residue polypeptide: Nucleoplasmin-3 (178 aa).

The residue at position 2 (A2) is an N-acetylalanine. Residues S13 and S16 each carry the phosphoserine modification. At R27 the chain carries Omega-N-methylarginine. Residues 141–178 (TMSNDVSEEESEEEEEDSDEEEVELCPILPAKKQGGRP) are disordered. Over residues 146-164 (VSEEESEEEEEDSDEEEVE) the composition is skewed to acidic residues. 3 positions are modified to phosphoserine: S147, S151, and S158.

Belongs to the nucleoplasmin family. As to quaternary structure, interacts with NPM (via N-terminus). Forms a pentamer with NPM at a ratio 4:1 (NPM3/NPM). Two pentamers form a decamer. Post-translationally, phosphorylated. Ubiquitous.

The protein resides in the nucleus. It is found in the nucleolus. Its function is as follows. Plays a role in the regulation of diverse cellular processes such as ribosome biogenesis, chromatin remodeling or protein chaperoning. Modulates the histone chaperone function and the RNA-binding activity of nucleolar phosphoprotein B23/NPM. Efficiently mediates chromatin remodeling when included in a pentamer containing NPM3 and NPM. This is Nucleoplasmin-3 (NPM3) from Homo sapiens (Human).